Reading from the N-terminus, the 31-residue chain is Cytochrome b6-f complex subunit 6 (31 aa).

A helical membrane pass occupies residues 4 to 24 (ITSYFGFLLVALTITSALFIG).

The protein belongs to the PetL family. As to quaternary structure, the 4 large subunits of the cytochrome b6-f complex are cytochrome b6, subunit IV (17 kDa polypeptide, PetD), cytochrome f and the Rieske protein, while the 4 small subunits are PetG, PetL, PetM and PetN. The complex functions as a dimer.

It localises to the plastid. Its subcellular location is the chloroplast thylakoid membrane. Its function is as follows. Component of the cytochrome b6-f complex, which mediates electron transfer between photosystem II (PSII) and photosystem I (PSI), cyclic electron flow around PSI, and state transitions. PetL is important for photoautotrophic growth as well as for electron transfer efficiency and stability of the cytochrome b6-f complex. In Panax ginseng (Korean ginseng), this protein is Cytochrome b6-f complex subunit 6.